The sequence spans 436 residues: 3-ketoacyl-CoA thiolase (436 aa).

Catalysis depends on Cys-99, which acts as the Acyl-thioester intermediate. Residues His-392 and Cys-422 each act as proton acceptor in the active site.

The protein belongs to the thiolase-like superfamily. Thiolase family. Heterotetramer of two alpha chains (FadJ) and two beta chains (FadI).

The protein resides in the cytoplasm. The enzyme catalyses an acyl-CoA + acetyl-CoA = a 3-oxoacyl-CoA + CoA. It participates in lipid metabolism; fatty acid beta-oxidation. Its function is as follows. Catalyzes the final step of fatty acid oxidation in which acetyl-CoA is released and the CoA ester of a fatty acid two carbons shorter is formed. The protein is 3-ketoacyl-CoA thiolase of Shigella boydii serotype 4 (strain Sb227).